A 367-amino-acid chain; its full sequence is tRNA/tmRNA (uracil-C(5))-methyltransferase (367 aa).

S-adenosyl-L-methionine is bound by residues Q190, Y218, N223, E239, and D299. C324 serves as the catalytic Nucleophile. E358 acts as the Proton acceptor in catalysis.

This sequence belongs to the class I-like SAM-binding methyltransferase superfamily. RNA M5U methyltransferase family. TrmA subfamily.

It catalyses the reaction uridine(54) in tRNA + S-adenosyl-L-methionine = 5-methyluridine(54) in tRNA + S-adenosyl-L-homocysteine + H(+). The catalysed reaction is uridine(341) in tmRNA + S-adenosyl-L-methionine = 5-methyluridine(341) in tmRNA + S-adenosyl-L-homocysteine + H(+). Functionally, dual-specificity methyltransferase that catalyzes the formation of 5-methyluridine at position 54 (m5U54) in all tRNAs, and that of position 341 (m5U341) in tmRNA (transfer-mRNA). This chain is tRNA/tmRNA (uracil-C(5))-methyltransferase, found in Dickeya chrysanthemi (strain Ech1591) (Dickeya zeae (strain Ech1591)).